We begin with the raw amino-acid sequence, 342 residues long: Protein-glutamate methylesterase/protein-glutamine glutaminase 4 (342 aa).

The Response regulatory domain maps to 2–119 (NIGIVNDLPL…GGSADPSQPL (118 aa)). Aspartate 53 bears the 4-aspartylphosphate mark. In terms of domain architecture, CheB-type methylesterase spans 144-337 (PAPQGALPPL…DQLISLVQRN (194 aa)). Active-site residues include serine 159, histidine 186, and aspartate 279.

This sequence belongs to the CheB family. Phosphorylated by CheA. Phosphorylation of the N-terminal regulatory domain activates the methylesterase activity.

The protein resides in the cytoplasm. It catalyses the reaction [protein]-L-glutamate 5-O-methyl ester + H2O = L-glutamyl-[protein] + methanol + H(+). The catalysed reaction is L-glutaminyl-[protein] + H2O = L-glutamyl-[protein] + NH4(+). Functionally, involved in chemotaxis. Part of a chemotaxis signal transduction system that modulates chemotaxis in response to various stimuli. Catalyzes the demethylation of specific methylglutamate residues introduced into the chemoreceptors (methyl-accepting chemotaxis proteins or MCP) by CheR. Also mediates the irreversible deamidation of specific glutamine residues to glutamic acid. The polypeptide is Protein-glutamate methylesterase/protein-glutamine glutaminase 4 (Burkholderia thailandensis (strain ATCC 700388 / DSM 13276 / CCUG 48851 / CIP 106301 / E264)).